Here is a 172-residue protein sequence, read N- to C-terminus: Putative metal-dependent hydrolase OB0782 (172 aa).

Zn(2+) contacts are provided by His-64, His-155, and His-159.

Belongs to the metal hydrolase YfiT family. In terms of assembly, homodimer. It depends on Zn(2+) as a cofactor.

It localises to the cytoplasm. Its function is as follows. Possible metal-dependent hydrolase. The chain is Putative metal-dependent hydrolase OB0782 from Oceanobacillus iheyensis (strain DSM 14371 / CIP 107618 / JCM 11309 / KCTC 3954 / HTE831).